A 446-amino-acid chain; its full sequence is Na(+)-translocating NADH-quinone reductase subunit A (446 aa).

Belongs to the NqrA family. In terms of assembly, composed of six subunits; NqrA, NqrB, NqrC, NqrD, NqrE and NqrF.

The enzyme catalyses a ubiquinone + n Na(+)(in) + NADH + H(+) = a ubiquinol + n Na(+)(out) + NAD(+). In terms of biological role, NQR complex catalyzes the reduction of ubiquinone-1 to ubiquinol by two successive reactions, coupled with the transport of Na(+) ions from the cytoplasm to the periplasm. NqrA to NqrE are probably involved in the second step, the conversion of ubisemiquinone to ubiquinol. This Vibrio vulnificus (strain CMCP6) protein is Na(+)-translocating NADH-quinone reductase subunit A.